A 274-amino-acid polypeptide reads, in one-letter code: 2,3,4,5-tetrahydropyridine-2,6-dicarboxylate N-succinyltransferase (274 aa).

Positions 104 and 141 each coordinate substrate.

The protein belongs to the transferase hexapeptide repeat family. As to quaternary structure, homotrimer.

The protein localises to the cytoplasm. It carries out the reaction (S)-2,3,4,5-tetrahydrodipicolinate + succinyl-CoA + H2O = (S)-2-succinylamino-6-oxoheptanedioate + CoA. The protein operates within amino-acid biosynthesis; L-lysine biosynthesis via DAP pathway; LL-2,6-diaminopimelate from (S)-tetrahydrodipicolinate (succinylase route): step 1/3. This is 2,3,4,5-tetrahydropyridine-2,6-dicarboxylate N-succinyltransferase from Escherichia coli O139:H28 (strain E24377A / ETEC).